Here is a 1000-residue protein sequence, read N- to C-terminus: Chromosome transmission fidelity protein 18 homolog (1000 aa).

Disordered stretches follow at residues Ser53–Ser89, Ala130–Phe159, and Glu272–Leu301. Positions Ser60–Ser70 are enriched in polar residues. Residues Glu272–Glu295 show a composition bias toward acidic residues. Gly396–Thr403 is an ATP binding site. A compositionally biased stretch (polar residues) spans Ala888 to Ala898. Residues Ala888–Pro916 are disordered.

Belongs to the activator 1 small subunits family. CTF18 subfamily. Component of the CTF18-RFC complex, which consists of ctf18, ctf8, dcc1, rfc2, rfc3, rfc4 and rfc5. The CTF18-RFC complex associates with pcna.

The protein resides in the nucleus. Its function is as follows. Chromosome cohesion factor involved in sister chromatid cohesion and fidelity of chromosome transmission. Component of one of the cell nuclear antigen loader complexes, CTF18-replication factor C (CTF18-RFC), which consists of ctf18, ctf8, dcc1, rfc2, rfc3, rfc4 and rfc5. The CTF18-RFC complex binds to single-stranded and primed DNAs and has weak ATPase activity that is stimulated by the presence of primed DNA, replication protein A (RPA) and by proliferating cell nuclear antigen (pcna). The CTF18-RFC complex catalyzes the ATP-dependent loading of pcna onto primed and gapped DNA. The chain is Chromosome transmission fidelity protein 18 homolog (chtf18) from Xenopus laevis (African clawed frog).